A 381-amino-acid polypeptide reads, in one-letter code: MSNPSPQAPEEEASTSVCRPQSCSMASASRRHRRERRFRRYLSAGRLVRAQALLQRHPGLDVDAGQPPPLHRACARHDAPALCLLLRLGADPAHQDRHGDTALHAAARQGPDAYTDFFLPLLSRCPSAMGIKNKDGETPGQILGWGPPWDSAEEEEDEEVSKEREWRQKLQGELEDEWQEVIGRFEDDASRDTQEPESFSAWSERLAREHAQKQRQQLEAEGSCRPPRAEGSSHSWRQHEEEQRLFRERARAKEKELCESRARRAQEAQRDKGPEPPRAGPRAEHPRGAERGSLWRFGDVPWPCPGGGDPEAMAAALVARGPPLEEQGALKRYLRVQQVRWHPDRFLQRFRSQIETWELGRVMGAVTALSQALNRHAEALK.

The tract at residues 1–34 (MSNPSPQAPEEEASTSVCRPQSCSMASASRRHRR) is disordered. The segment covering 14–27 (STSVCRPQSCSMAS) has biased composition (polar residues). ANK repeat units follow at residues 64–93 (AGQP…ADPA) and 97–134 (RHGD…IKNK). Disordered stretches follow at residues 132–167 (KNKD…REWR) and 186–298 (EDDA…WRFG). Ser-151 is modified (phosphoserine). A compositionally biased stretch (acidic residues) spans 151-160 (SAEEEEDEEV). 2 stretches are compositionally biased toward basic and acidic residues: residues 205-218 (RLAR…RQQL) and 237-290 (RQHE…RGAE).

As to quaternary structure, interacts with CACTIN (via N-terminal domain); the interaction occurs in a pro-inflammatory-independent manner. High expression found in heart muscle, liver, kidney and skin. Not detected in spleen, lung and brain.

The protein resides in the nucleus. Its function is as follows. Involved in the regulation of innate immune response. Acts as negative regulator of Toll-like receptor and interferon-regulatory factor (IRF) signaling pathways. Contributes to the negative regulation of transcriptional activation of NF-kappa-B target genes in response to endogenous pro-inflammatory stimuli. This chain is NF-kappa-B inhibitor-like protein 1 (Nfkbil1), found in Mus musculus (Mouse).